Consider the following 147-residue polypeptide: Lysozyme C-1 (147 aa).

The signal sequence occupies residues 1-18 (MKALIILGFLFLSVAVQG). In terms of domain architecture, C-type lysozyme spans 19 to 147 (KVFERCELAR…VSSYVEGCTL (129 aa)). 4 cysteine pairs are disulfide-bonded: Cys24/Cys145, Cys48/Cys133, Cys83/Cys99, and Cys95/Cys113. Residues Glu53 and Asp71 contribute to the active site.

It belongs to the glycosyl hydrolase 22 family. As to quaternary structure, monomer. In terms of tissue distribution, stomach-specific.

It carries out the reaction Hydrolysis of (1-&gt;4)-beta-linkages between N-acetylmuramic acid and N-acetyl-D-glucosamine residues in a peptidoglycan and between N-acetyl-D-glucosamine residues in chitodextrins.. Its function is as follows. Lysozymes have primarily a bacteriolytic function; those in tissues and body fluids are associated with the monocyte-macrophage system and enhance the activity of immunoagents. The protein is Lysozyme C-1 (LYZ1) of Bos taurus (Bovine).